Reading from the N-terminus, the 269-residue chain is MNMKEISKVVDLVRESNPLVHNITNVVVTNFTANGLLALGASPVMAYAKEEVAEMASIAGALVLNMGTLRPEEVEAMLLAGKSANVNNVPVLFDPVGAGATSYRTEVARHIPAEIELASIRGNAAEIANVINERWEIKGVDAGTGNGNVVSIARQAADELNTVAVITGKEDVVTDGERTIVIRNGHPILTKVTGTGCLLTSVIGAFVAVEKDYVKAAVAALTFYGVASELAAAKTVEKGPGSFQIEFLNQLANTTSSDIEKYGKIEELE.

M45 contacts substrate. ATP contacts are provided by R121 and T167. G194 serves as a coordination point for substrate.

It belongs to the Thz kinase family. The cofactor is Mg(2+).

The enzyme catalyses 5-(2-hydroxyethyl)-4-methylthiazole + ATP = 4-methyl-5-(2-phosphooxyethyl)-thiazole + ADP + H(+). It functions in the pathway cofactor biosynthesis; thiamine diphosphate biosynthesis; 4-methyl-5-(2-phosphoethyl)-thiazole from 5-(2-hydroxyethyl)-4-methylthiazole: step 1/1. In terms of biological role, catalyzes the phosphorylation of the hydroxyl group of 4-methyl-5-beta-hydroxyethylthiazole (THZ). The sequence is that of Hydroxyethylthiazole kinase from Bacillus cereus (strain ATCC 14579 / DSM 31 / CCUG 7414 / JCM 2152 / NBRC 15305 / NCIMB 9373 / NCTC 2599 / NRRL B-3711).